Consider the following 272-residue polypeptide: 3-methyl-2-oxobutanoate hydroxymethyltransferase (272 aa).

Residues aspartate 43 and aspartate 82 each contribute to the Mg(2+) site. Residues 43–44 (DS), aspartate 82, and lysine 112 contribute to the 3-methyl-2-oxobutanoate site. Glutamate 114 contacts Mg(2+). Glutamate 179 functions as the Proton acceptor in the catalytic mechanism.

The protein belongs to the PanB family. As to quaternary structure, homodecamer; pentamer of dimers. Mg(2+) is required as a cofactor.

The protein localises to the cytoplasm. It carries out the reaction 3-methyl-2-oxobutanoate + (6R)-5,10-methylene-5,6,7,8-tetrahydrofolate + H2O = 2-dehydropantoate + (6S)-5,6,7,8-tetrahydrofolate. It participates in cofactor biosynthesis; (R)-pantothenate biosynthesis; (R)-pantoate from 3-methyl-2-oxobutanoate: step 1/2. In terms of biological role, catalyzes the reversible reaction in which hydroxymethyl group from 5,10-methylenetetrahydrofolate is transferred onto alpha-ketoisovalerate to form ketopantoate. The chain is 3-methyl-2-oxobutanoate hydroxymethyltransferase from Staphylococcus aureus (strain bovine RF122 / ET3-1).